We begin with the raw amino-acid sequence, 210 residues long: UPF0173 protein PYRAB01190 (210 aa).

It belongs to the UPF0173 family.

In Pyrococcus abyssi (strain GE5 / Orsay), this protein is UPF0173 protein PYRAB01190.